The chain runs to 1034 residues: Glycine dehydrogenase (decarboxylating), mitochondrial (1034 aa).

The transit peptide at 1-63 (MERARRLAML…LNGFGSQVRT (63 aa)) directs the protein to the mitochondrion. At K770 the chain carries N6-(pyridoxal phosphate)lysine.

It belongs to the GcvP family. As to quaternary structure, homodimer. The glycine cleavage system is composed of four proteins: P, T, L and H. Pyridoxal 5'-phosphate serves as cofactor.

It is found in the mitochondrion. It catalyses the reaction N(6)-[(R)-lipoyl]-L-lysyl-[glycine-cleavage complex H protein] + glycine + H(+) = N(6)-[(R)-S(8)-aminomethyldihydrolipoyl]-L-lysyl-[glycine-cleavage complex H protein] + CO2. Functionally, the glycine cleavage system catalyzes the degradation of glycine. The P protein binds the alpha-amino group of glycine through its pyridoxal phosphate cofactor; CO(2) is released and the remaining methylamine moiety is then transferred to the lipoamide cofactor of the H protein. The sequence is that of Glycine dehydrogenase (decarboxylating), mitochondrial (GDCSPA) from Flaveria trinervia (Clustered yellowtops).